The following is a 206-amino-acid chain: Probable glutathione peroxidase 3, mitochondrial (206 aa).

A mitochondrion-targeting transit peptide spans 1–12; sequence MPRSSRWVNQRA. The active site involves cysteine 80.

Belongs to the glutathione peroxidase family. As to quaternary structure, interacts with ABI1 and ABI2. In terms of tissue distribution, ubiquitous.

Its subcellular location is the mitochondrion. It carries out the reaction 2 glutathione + H2O2 = glutathione disulfide + 2 H2O. With respect to regulation, the redox states are modulated by H(2)O(2). Functionally, may constitute a glutathione peroxidase-like protective system against oxidative stresses. Involved positively in abscisic acid (ABA) signaling pathway that regulates numerous ABA responses, such as stomatal closure, seed germination and inhibition of vegetative growth. Oxidizes and represses target proteins (e.g. the phosphatase activity of ABI1 and ABI2) when oxidized by H(2)O(2), probably after ABA signaling. Modulates the calcium channel activity in guard cells in response to ABA or H(2)O(2). Confers tolerance to drought stress, by enhancing the ABA-dependent stomatal closure. This is Probable glutathione peroxidase 3, mitochondrial (GPX3) from Arabidopsis thaliana (Mouse-ear cress).